The primary structure comprises 258 residues: Probable dihydroorotate dehydrogenase B (NAD(+)), electron transfer subunit (258 aa).

Positions 1–90 (MRPISATIKE…RGPYGNGWEI (90 aa)) constitute an FAD-binding FR-type domain. [2Fe-2S] cluster is bound by residues C210, C215, C218, and C228.

The protein belongs to the PyrK family. In terms of assembly, heterotetramer of 2 PyrK and 2 PyrD type B subunits. Requires [2Fe-2S] cluster as cofactor. It depends on FAD as a cofactor.

It participates in pyrimidine metabolism; UMP biosynthesis via de novo pathway; orotate from (S)-dihydroorotate (NAD(+) route): step 1/1. Responsible for channeling the electrons from the oxidation of dihydroorotate from the FMN redox center in the PyrD type B subunit to the ultimate electron acceptor NAD(+). The sequence is that of Probable dihydroorotate dehydrogenase B (NAD(+)), electron transfer subunit from Methanocella arvoryzae (strain DSM 22066 / NBRC 105507 / MRE50).